Here is a 126-residue protein sequence, read N- to C-terminus: Small ribosomal subunit protein uS12 (126 aa).

The segment at 1 to 29 (MPTIQQLIRQPRAPKKRRSKSPALQKCPQ) is disordered. Residue Asp89 is modified to 3-methylthioaspartic acid.

It belongs to the universal ribosomal protein uS12 family. Part of the 30S ribosomal subunit. Contacts proteins S8 and S17. May interact with IF1 in the 30S initiation complex.

Its function is as follows. With S4 and S5 plays an important role in translational accuracy. Interacts with and stabilizes bases of the 16S rRNA that are involved in tRNA selection in the A site and with the mRNA backbone. Located at the interface of the 30S and 50S subunits, it traverses the body of the 30S subunit contacting proteins on the other side and probably holding the rRNA structure together. The combined cluster of proteins S8, S12 and S17 appears to hold together the shoulder and platform of the 30S subunit. The chain is Small ribosomal subunit protein uS12 from Protochlamydia amoebophila (strain UWE25).